Consider the following 54-residue polypeptide: Photosystem II reaction center protein K (54 aa).

A propeptide spanning residues 1 to 17 (MSFENFAIITLKENVFA) is cleaved from the precursor. The helical transmembrane segment at 33–53 (LPIIPVLFLLLAFVWQSAVKF) threads the bilayer.

The protein belongs to the PsbK family. In terms of assembly, PSII is composed of 1 copy each of membrane proteins PsbA, PsbB, PsbC, PsbD, PsbE, PsbF, PsbH, PsbI, PsbJ, PsbK, PsbL, PsbM, PsbT, PsbY, PsbZ, Psb30/Ycf12, at least 3 peripheral proteins of the oxygen-evolving complex and a large number of cofactors. It forms dimeric complexes.

It is found in the plastid. Its subcellular location is the chloroplast thylakoid membrane. In terms of biological role, one of the components of the core complex of photosystem II (PSII). PSII is a light-driven water:plastoquinone oxidoreductase that uses light energy to abstract electrons from H(2)O, generating O(2) and a proton gradient subsequently used for ATP formation. It consists of a core antenna complex that captures photons, and an electron transfer chain that converts photonic excitation into a charge separation. The sequence is that of Photosystem II reaction center protein K from Euglena deses.